The chain runs to 66 residues: Large ribosomal subunit protein bL35 (66 aa).

This sequence belongs to the bacterial ribosomal protein bL35 family.

This chain is Large ribosomal subunit protein bL35, found in Leptospira biflexa serovar Patoc (strain Patoc 1 / Ames).